Here is a 461-residue protein sequence, read N- to C-terminus: Peptidyl-prolyl cis-trans isomerase-like 4 (461 aa).

Residues 1–171 form the PPIase cyclophilin-type domain; the sequence is MSVLLETSLG…KDIRIRHTVI (171 aa). The RRM domain maps to 248–326; that stretch reads NVLFVCKLNP…HRIHVDFSQS (79 aa). Positions 372–461 are disordered; the sequence is NYNMVFDKND…DDRYRDRRRR (90 aa). Composition is skewed to basic and acidic residues over residues 378–392 and 400–461; these read DKND…ERSY and NYRD…RRRR.

Belongs to the cyclophilin-type PPIase family. PPIL4 subfamily.

The protein localises to the nucleus. It carries out the reaction [protein]-peptidylproline (omega=180) = [protein]-peptidylproline (omega=0). Its function is as follows. PPIases accelerate the folding of proteins. It catalyzes the cis-trans isomerization of proline imidic peptide bonds in oligopeptides. In Emericella nidulans (strain FGSC A4 / ATCC 38163 / CBS 112.46 / NRRL 194 / M139) (Aspergillus nidulans), this protein is Peptidyl-prolyl cis-trans isomerase-like 4 (cyp6).